A 265-amino-acid polypeptide reads, in one-letter code: 4-diphosphocytidyl-2-C-methyl-D-erythritol kinase (265 aa).

The active site involves K8. ATP is bound at residue 95 to 105 (PIGAGLGGGSS). The active site involves D135.

The protein belongs to the GHMP kinase family. IspE subfamily.

It catalyses the reaction 4-CDP-2-C-methyl-D-erythritol + ATP = 4-CDP-2-C-methyl-D-erythritol 2-phosphate + ADP + H(+). The protein operates within isoprenoid biosynthesis; isopentenyl diphosphate biosynthesis via DXP pathway; isopentenyl diphosphate from 1-deoxy-D-xylulose 5-phosphate: step 3/6. In terms of biological role, catalyzes the phosphorylation of the position 2 hydroxy group of 4-diphosphocytidyl-2C-methyl-D-erythritol. The chain is 4-diphosphocytidyl-2-C-methyl-D-erythritol kinase from Ureaplasma parvum serovar 3 (strain ATCC 27815 / 27 / NCTC 11736).